The sequence spans 666 residues: NAD(P)H-quinone oxidoreductase subunit 5, organellar chromatophore 1 (666 aa).

The next 15 helical transmembrane spans lie at 8–28 (LVWLIPILPFIGAFLVGFGLI), 41–61 (AALLLISSVGISAVLSFMVLA), 90–110 (VDPIGATMLALVSTVAILVMV), 121–141 (SYVRFFTYLGLFTSSMLALIL), 145–165 (LLEIYVFWELVGMCSYLLIGF), 190–210 (FLLGILGLFWATNSFDFQIVA), 220–240 (GSIPHWAAIALCLLLFMGPMA), 259–279 (TPISALIHAATMVAAGVFLVA), 293–313 (IIVAVIGTITCFLGASIALIQ), 328–348 (LGYMMLAMGCGAPVAGMFHLI), 396–416 (GITFFIGCVAISGIPPLAGFW), 428–448 (SYPLLWGVGLFTAGLTAFYMF), 497–517 (TLPLVILSVPSVLIGFLGSPW), 542–562 (FLPLAIASVMISTCGIVIATI), and 643–663 (GRPQFYALIIFGGVISLIVIF).

It belongs to the complex I subunit 5 family. As to quaternary structure, NDH is composed of at least 16 different subunits, 5 of which are encoded in the nucleus.

Its subcellular location is the plastid. It localises to the organellar chromatophore thylakoid membrane. It carries out the reaction a plastoquinone + NADH + (n+1) H(+)(in) = a plastoquinol + NAD(+) + n H(+)(out). The enzyme catalyses a plastoquinone + NADPH + (n+1) H(+)(in) = a plastoquinol + NADP(+) + n H(+)(out). Functionally, NDH shuttles electrons from NAD(P)H:plastoquinone, via FMN and iron-sulfur (Fe-S) centers, to quinones in the photosynthetic chain and possibly in a chloroplast respiratory chain. The immediate electron acceptor for the enzyme in this species is believed to be plastoquinone. Couples the redox reaction to proton translocation, and thus conserves the redox energy in a proton gradient. In Paulinella chromatophora, this protein is NAD(P)H-quinone oxidoreductase subunit 5, organellar chromatophore 1 (ndhF1).